A 225-amino-acid polypeptide reads, in one-letter code: Techylectin-like protein (225 aa).

The Fibrinogen C-terminal domain maps to 32–225 (CPSPPLPIDC…WTEIKIKDVK (194 aa)). Cysteines 41 and 60 form a disulfide. The short motif at 75–77 (RGD) is the Cell attachment site element. Ca(2+) is bound by residues Asp-164 and Thr-170. A disulfide bridge connects residues Cys-172 and Cys-185.

In terms of tissue distribution, expressed by the venom gland.

The protein resides in the secreted. Its function is as follows. Lectin involved in innate immunity. This Phoneutria nigriventer (Brazilian armed spider) protein is Techylectin-like protein.